A 637-amino-acid chain; its full sequence is Chaperone protein HtpG (637 aa).

An a; substrate-binding region spans residues 1-335 (MQGTVNSERL…SSDLPLNISR (335 aa)). The tract at residues 336 to 559 (ETLQNNKIIE…DGSMDIRMER (224 aa)) is b. A c region spans residues 560 to 637 (FLREQKQLNY…RMNSVLSQIN (78 aa)).

The protein belongs to the heat shock protein 90 family. In terms of assembly, homodimer.

The protein localises to the cytoplasm. Its function is as follows. Molecular chaperone. Has ATPase activity. The chain is Chaperone protein HtpG from Ehrlichia ruminantium (strain Gardel).